The chain runs to 105 residues: U2-lycotoxin-Ls1d (105 aa).

The signal sequence occupies residues 1–17 (MIKYVLISALLVVAVYS). The propeptide occupies 18-41 (FTIEDNEDALLEEAEDELDTEEER). 4 disulfides stabilise this stretch: C51-C67, C58-C97, C60-C83, and C69-C81.

The protein belongs to the neurotoxin 04 (omega-agtx) family. 01 (type I omega-agtx) subfamily. As to expression, expressed by the venom gland.

It is found in the secreted. In terms of biological role, insecticidal to house crickets. It induces an excitatory slow-onset impact that leads to irreversible spastic paralysis. It also modifies human voltage-gated potassium channel Kv1.5/KCNA5. Most likely, it binds to the voltage-sensing domain of the channel, suggesting it does not block the pore but prevents its opening at physiological membrane potentials. The recombinant peptide binds to the channel in an irreversible manner and slows down the hKv1.5 current activation kinetics. It is not toxic to mice, when intracranially injected (at 0.5 ug/g mouse). This Lycosa singoriensis (Wolf spider) protein is U2-lycotoxin-Ls1d.